The following is a 212-amino-acid chain: Fibroblast growth factor 8b (212 aa).

The N-terminal stretch at 1 to 27 (MRLKSSRLGYLFLQFMTLCFYTQMTMQ) is a signal peptide. An N-linked (GlcNAc...) asparagine glycan is attached at Asn139.

The protein belongs to the heparin-binding growth factors family.

It localises to the secreted. Its function is as follows. May act as signaling molecule during development of the midbrain-hindbrain boundary (MHB) organizer, and be involved in patterning of the nervous system. The chain is Fibroblast growth factor 8b (fgf8b) from Danio rerio (Zebrafish).